A 303-amino-acid chain; its full sequence is 4-diphosphocytidyl-2-C-methyl-D-erythritol kinase (303 aa).

K24 is a catalytic residue. An ATP-binding site is contributed by P111–A121. D153 is an active-site residue.

This sequence belongs to the GHMP kinase family. IspE subfamily.

It carries out the reaction 4-CDP-2-C-methyl-D-erythritol + ATP = 4-CDP-2-C-methyl-D-erythritol 2-phosphate + ADP + H(+). Its pathway is isoprenoid biosynthesis; isopentenyl diphosphate biosynthesis via DXP pathway; isopentenyl diphosphate from 1-deoxy-D-xylulose 5-phosphate: step 3/6. Catalyzes the phosphorylation of the position 2 hydroxy group of 4-diphosphocytidyl-2C-methyl-D-erythritol. The chain is 4-diphosphocytidyl-2-C-methyl-D-erythritol kinase from Rhizobium johnstonii (strain DSM 114642 / LMG 32736 / 3841) (Rhizobium leguminosarum bv. viciae).